The sequence spans 185 residues: Ribosome-recycling factor (185 aa).

Belongs to the RRF family.

It localises to the cytoplasm. In terms of biological role, responsible for the release of ribosomes from messenger RNA at the termination of protein biosynthesis. May increase the efficiency of translation by recycling ribosomes from one round of translation to another. This chain is Ribosome-recycling factor, found in Wolbachia sp. subsp. Brugia malayi (strain TRS).